The following is a 353-amino-acid chain: Alternative oxidase, mitochondrial (353 aa).

Residues 25–45 are disordered; that stretch reads FRSTDDEDENNPSTELATDTT. Over residues 35–45 the composition is skewed to polar residues; the sequence is NPSTELATDTT. The helical transmembrane segment at 153–173 threads the bilayer; sequence FLFLESIAGVPGMVAGMIRHL. Fe cation is bound by residues E157, E196, and H199. Residues 217–237 form a helical membrane-spanning segment; sequence LLIGQIIFYNLFFISYLISPA. 3 residues coordinate Fe cation: E247, E301, and H304.

It belongs to the alternative oxidase family. Fe cation is required as a cofactor.

The protein localises to the mitochondrion inner membrane. In terms of biological role, catalyzes cyanide-resistant oxygen consumption. May increase respiration when the cytochrome respiratory pathway is restricted, or in response to low temperatures. The sequence is that of Alternative oxidase, mitochondrial (AOX) from Yarrowia lipolytica (strain CLIB 122 / E 150) (Yeast).